A 308-amino-acid chain; its full sequence is Putative S-adenosyl-L-methionine-dependent methyltransferase MAB_4585c (308 aa).

S-adenosyl-L-methionine is bound by residues Asp131 and 160-161 (DL).

Belongs to the UPF0677 family.

Functionally, exhibits S-adenosyl-L-methionine-dependent methyltransferase activity. In Mycobacteroides abscessus (strain ATCC 19977 / DSM 44196 / CCUG 20993 / CIP 104536 / JCM 13569 / NCTC 13031 / TMC 1543 / L948) (Mycobacterium abscessus), this protein is Putative S-adenosyl-L-methionine-dependent methyltransferase MAB_4585c.